The chain runs to 104 residues: MAAKIRKGDKVIVLSGRDKGRTGEVFEVRPDADVALVRGINMIKRHQKQTQTQEGGIISKEAPIHLSNIAIVGKDGKPTRVGFKVLADGKKVRIAKSSGAEIDG.

This sequence belongs to the universal ribosomal protein uL24 family. As to quaternary structure, part of the 50S ribosomal subunit.

One of two assembly initiator proteins, it binds directly to the 5'-end of the 23S rRNA, where it nucleates assembly of the 50S subunit. Functionally, one of the proteins that surrounds the polypeptide exit tunnel on the outside of the subunit. This chain is Large ribosomal subunit protein uL24, found in Rhodopseudomonas palustris (strain BisB5).